Consider the following 265-residue polypeptide: Small ribosomal subunit protein uS2 (265 aa).

This sequence belongs to the universal ribosomal protein uS2 family.

The polypeptide is Small ribosomal subunit protein uS2 (Gluconobacter oxydans (strain 621H) (Gluconobacter suboxydans)).